We begin with the raw amino-acid sequence, 163 residues long: Probable calcium-binding protein CML26 (163 aa).

N-acetylalanine is present on Ala2. 4 consecutive EF-hand domains span residues 16–51 (STDM…MGTS), 52–82 (YTEE…TICR), 85–120 (SSAV…LGMT), and 121–156 (CSVE…PELV). The Ca(2+) site is built by Asp29, Asn31, Asp33, Lys35, Glu40, Asp65, Asp67, Asp69, Glu76, Asp98, Asn100, Asn102, Glu109, Asp134, Asp136, Asp138, Asn140, and Glu145.

Functionally, potential calcium sensor. This is Probable calcium-binding protein CML26 (CML26) from Arabidopsis thaliana (Mouse-ear cress).